The sequence spans 874 residues: Alanine--tRNA ligase (874 aa).

Positions 562, 566, 664, and 668 each coordinate Zn(2+).

The protein belongs to the class-II aminoacyl-tRNA synthetase family. It depends on Zn(2+) as a cofactor.

The protein resides in the cytoplasm. The enzyme catalyses tRNA(Ala) + L-alanine + ATP = L-alanyl-tRNA(Ala) + AMP + diphosphate. Catalyzes the attachment of alanine to tRNA(Ala) in a two-step reaction: alanine is first activated by ATP to form Ala-AMP and then transferred to the acceptor end of tRNA(Ala). Also edits incorrectly charged Ser-tRNA(Ala) and Gly-tRNA(Ala) via its editing domain. This is Alanine--tRNA ligase from Shewanella loihica (strain ATCC BAA-1088 / PV-4).